A 104-amino-acid chain; its full sequence is Large ribosomal subunit protein eL30 (104 aa).

Belongs to the eukaryotic ribosomal protein eL30 family.

The polypeptide is Large ribosomal subunit protein eL30 (RPL30) (Tetrahymena thermophila (strain SB210)).